Reading from the N-terminus, the 208-residue chain is Small ribosomal subunit protein uS4 (208 aa).

In terms of domain architecture, S4 RNA-binding spans 98–161; the sequence is RRLDNTIYRL…RQSPIILEAQ (64 aa).

It belongs to the universal ribosomal protein uS4 family. As to quaternary structure, part of the 30S ribosomal subunit. Contacts protein S5. The interaction surface between S4 and S5 is involved in control of translational fidelity.

In terms of biological role, one of the primary rRNA binding proteins, it binds directly to 16S rRNA where it nucleates assembly of the body of the 30S subunit. Functionally, with S5 and S12 plays an important role in translational accuracy. In Solidesulfovibrio magneticus (strain ATCC 700980 / DSM 13731 / RS-1) (Desulfovibrio magneticus), this protein is Small ribosomal subunit protein uS4.